The chain runs to 62 residues: Probable tautomerase SH1546 (62 aa).

Catalysis depends on proline 2, which acts as the Proton acceptor; via imino nitrogen.

It belongs to the 4-oxalocrotonate tautomerase family.

The sequence is that of Probable tautomerase SH1546 from Staphylococcus haemolyticus (strain JCSC1435).